A 261-amino-acid polypeptide reads, in one-letter code: N-acetyltransferase ECO1 (261 aa).

Residues 29–53 (LKCPKCEMKYSPNSIDDVATHKKYH) form a CCHH-type zinc finger. Residues 102-261 (VMIQENKPAE…SGHILIPCYL (160 aa)) form the N-acetyltransferase domain.

Belongs to the acetyltransferase family. ECO subfamily.

The protein resides in the nucleus. Functionally, probable acetyltransferase required for the establishment of sister chromatid cohesion and couple the processes of cohesion and DNA replication to ensure that only sister chromatids become paired together. In contrast to the structural cohesins, the deposition and establishment factors are required only during S phase. Acts by acetylating the cohesin complex component SMC3. This is N-acetyltransferase ECO1 (ECO1) from Candida glabrata (strain ATCC 2001 / BCRC 20586 / JCM 3761 / NBRC 0622 / NRRL Y-65 / CBS 138) (Yeast).